A 40-amino-acid chain; its full sequence is Small polypeptide DEVIL 3 (40 aa).

Positions 9–40 are required for DVL/RTFL small polypeptide activity; that stretch reads PCNKKLGGYLKEQKGRLYIIRRCVVMLICWHD. The chain crosses the membrane as a helical span at residues 12–28; that stretch reads KKLGGYLKEQKGRLYII.

The protein belongs to the DVL/RTFL small polypeptides family. Mostly expressed in flowers and stems, and, to a lower extent, in roots and leaves.

It localises to the cell membrane. In terms of biological role, small polypeptide acting as a regulatory molecule which coordinates cellular responses required for differentiation, growth and development, including leaves shape, pedicule elongation, inflorescence organization and fruit maturation, probably by restricting polar cell proliferation in lateral organs and coordinating socket cell recruitment and differentiation at trichome sites. The protein is Small polypeptide DEVIL 3 of Arabidopsis thaliana (Mouse-ear cress).